A 446-amino-acid chain; its full sequence is Thymidine phosphorylase (446 aa).

It belongs to the thymidine/pyrimidine-nucleoside phosphorylase family. As to quaternary structure, homodimer.

The enzyme catalyses thymidine + phosphate = 2-deoxy-alpha-D-ribose 1-phosphate + thymine. It functions in the pathway pyrimidine metabolism; dTMP biosynthesis via salvage pathway; dTMP from thymine: step 1/2. In terms of biological role, the enzymes which catalyze the reversible phosphorolysis of pyrimidine nucleosides are involved in the degradation of these compounds and in their utilization as carbon and energy sources, or in the rescue of pyrimidine bases for nucleotide synthesis. The protein is Thymidine phosphorylase of Psychromonas ingrahamii (strain DSM 17664 / CCUG 51855 / 37).